The chain runs to 421 residues: ATP-dependent RNA helicase RhlB (421 aa).

The short motif at 9 to 37 (QKFSDFALHPVVVQALEKKGFYNCTPIQA) is the Q motif element. Residues 40-219 (LPLTLAGRDV…FEQMNNAEYV (180 aa)) enclose the Helicase ATP-binding domain. ATP is bound at residue 53-60 (AQTGTGKT). The short motif at 165–168 (DEAD) is the DEAD box element. The region spanning 245-390 (RLLQTLIEEE…VSKYNPDALL (146 aa)) is the Helicase C-terminal domain. A disordered region spans residues 390–421 (LSELPPPKRLSRPRTGNGPRRSGAPRNRRRTG). Positions 405–414 (GNGPRRSGAP) are enriched in low complexity.

The protein belongs to the DEAD box helicase family. RhlB subfamily. As to quaternary structure, component of the RNA degradosome, which is a multiprotein complex involved in RNA processing and mRNA degradation.

Its subcellular location is the cytoplasm. The catalysed reaction is ATP + H2O = ADP + phosphate + H(+). Functionally, DEAD-box RNA helicase involved in RNA degradation. Has RNA-dependent ATPase activity and unwinds double-stranded RNA. The chain is ATP-dependent RNA helicase RhlB from Cronobacter sakazakii (strain ATCC BAA-894) (Enterobacter sakazakii).